Reading from the N-terminus, the 441-residue chain is Ribosomal protein uS12 methylthiotransferase RimO (441 aa).

The region spanning 7–117 (PKISFVSLGC…VLEAVHRAKP (111 aa)) is the MTTase N-terminal domain. 6 residues coordinate [4Fe-4S] cluster: C16, C52, C81, C148, C152, and C155. Positions 134-371 (LTPRHYAYLK…MARQQVISAR (238 aa)) constitute a Radical SAM core domain. A TRAM domain is found at 374–440 (KRKVGTRQQI…AYDLHGTVAG (67 aa)).

Belongs to the methylthiotransferase family. RimO subfamily. [4Fe-4S] cluster is required as a cofactor.

It localises to the cytoplasm. It catalyses the reaction L-aspartate(89)-[ribosomal protein uS12]-hydrogen + (sulfur carrier)-SH + AH2 + 2 S-adenosyl-L-methionine = 3-methylsulfanyl-L-aspartate(89)-[ribosomal protein uS12]-hydrogen + (sulfur carrier)-H + 5'-deoxyadenosine + L-methionine + A + S-adenosyl-L-homocysteine + 2 H(+). Catalyzes the methylthiolation of an aspartic acid residue of ribosomal protein uS12. The polypeptide is Ribosomal protein uS12 methylthiotransferase RimO (Rhodopseudomonas palustris (strain BisB5)).